The primary structure comprises 1032 residues: Reticulon-3 (1032 aa).

Over residues 1-24 the composition is skewed to low complexity; that stretch reads MAEPSAATQSHSISSSSFGAEPSA. A disordered region spans residues 1–61; that stretch reads MAEPSAATQS…SSSSSQPVSL (61 aa). A2 is subject to N-acetylalanine. The Cytoplasmic segment spans residues 2-863; sequence AEPSAATQSH…KKTGFVFGTT (862 aa). A Phosphoserine modification is found at S30. Over residues 32 to 61 the composition is skewed to low complexity; sequence GACPALGTKSCSSSCADSFVSSSSSQPVSL. Phosphoserine is present on residues S229, S243, S246, S283, S316, and S453. Residues 545–568 show a composition bias toward basic and acidic residues; it reads CEREEKTSKNFEELVSDSELHQDQ. The interval 545-617 is disordered; that stretch reads CEREEKTSKN…NPKLPSTVSP (73 aa). Over residues 605-617 the composition is skewed to polar residues; it reads TTENPKLPSTVSP. Phosphoserine is present on residues S649 and S650. Basic and acidic residues predominate over residues 696 to 715; it reads NESGGSEIKDIGSKYSEQSK. The disordered stretch occupies residues 696-726; sequence NESGGSEIKDIGSKYSEQSKETNGSEPLGVF. A Phosphoserine modification is found at S735. Positions 844-1032 constitute a Reticulon domain; sequence VHDLIFWRDV…LPGIAKKKAE (189 aa). Positions 864 to 887 form an intramembrane region, helical; it reads LIMLLSLAAFSVISVVSYLILALL. Topologically, residues 888-947 are cytoplasmic; that stretch reads SVTISFRIYKSVIQAVQKSEEGHPFKAYLDVDITLSSEAFHNYMNAAMVHINRALKLIIR. An intramembrane region (helical) is located at residues 948 to 968; that stretch reads LFLVEDLVDSLKLAVFMWLMT. Topologically, residues 969–972 are cytoplasmic; sequence YVGA. An intramembrane region (helical) is located at residues 973 to 993; it reads VFNGITLLILAELLIFSVPIV. An interaction with FADD region spans residues 987–1032; that stretch reads IFSVPIVYEKYKTQIDHYVGIARDQTKSIVEKIQAKLPGIAKKKAE. Over 994–1032 the chain is Cytoplasmic; sequence YEKYKTQIDHYVGIARDQTKSIVEKIQAKLPGIAKKKAE. Residues 1000–1002 are interaction with BACE1; sequence QID.

In terms of assembly, homodimer. Interacts with ATL1. Interacts with RTN4. Isoform 3 interacts with BACE1, BACE2, BCL2 and FADD. Interacts with ATL2. Interacts with TMEM33. Interacts with ZFYVE27 and with KIF5A in a ZFYVE27-dependent manner. Interacts with RIGI. Interacts with TRIM25. (Microbial infection) Interacts with Coxsackievirus A16, enterovirus 71 and poliovirus P2C proteins. As to quaternary structure, (Microbial infection) Interacts with West Nile virus protein NS4A. Isoform 3 is widely expressed, with highest levels in brain, where it is enriched in neuronal cell bodies from gray matter (at protein level). Three times more abundant in macula than in peripheral retina. Isoform 1 is expressed at high levels in brain and at low levels in skeletal muscle. Isoform 2 is only found in melanoma.

The protein localises to the endoplasmic reticulum membrane. It is found in the golgi apparatus membrane. Its function is as follows. May be involved in membrane trafficking in the early secretory pathway. Inhibits BACE1 activity and amyloid precursor protein processing. May induce caspase-8 cascade and apoptosis. May favor BCL2 translocation to the mitochondria upon endoplasmic reticulum stress. Induces the formation of endoplasmic reticulum tubules. Also acts as an inflammation-resolving regulator by interacting with both TRIM25 and RIGI, subsequently impairing RIGI 'Lys-63'-linked polyubiquitination leading to IRF3 and NF-kappa-B inhibition. Functionally, (Microbial infection) Plays a positive role in viral replication and pathogenesis of enteroviruses. This chain is Reticulon-3 (RTN3), found in Homo sapiens (Human).